The sequence spans 323 residues: Acetyl-coenzyme A carboxylase carboxyl transferase subunit alpha (323 aa).

The region spanning 39–293 (RLSKKSQQLT…RRALADSLRQ (255 aa)) is the CoA carboxyltransferase C-terminal domain.

The protein belongs to the AccA family. In terms of assembly, acetyl-CoA carboxylase is a heterohexamer composed of biotin carboxyl carrier protein (AccB), biotin carboxylase (AccC) and two subunits each of ACCase subunit alpha (AccA) and ACCase subunit beta (AccD).

The protein resides in the cytoplasm. The catalysed reaction is N(6)-carboxybiotinyl-L-lysyl-[protein] + acetyl-CoA = N(6)-biotinyl-L-lysyl-[protein] + malonyl-CoA. It functions in the pathway lipid metabolism; malonyl-CoA biosynthesis; malonyl-CoA from acetyl-CoA: step 1/1. Component of the acetyl coenzyme A carboxylase (ACC) complex. First, biotin carboxylase catalyzes the carboxylation of biotin on its carrier protein (BCCP) and then the CO(2) group is transferred by the carboxyltransferase to acetyl-CoA to form malonyl-CoA. The protein is Acetyl-coenzyme A carboxylase carboxyl transferase subunit alpha of Burkholderia multivorans (strain ATCC 17616 / 249).